A 258-amino-acid chain; its full sequence is Na(+)-translocating NADH-quinone reductase subunit C (258 aa).

A helical transmembrane segment spans residues Leu14–Gly34. Ser226 is modified (FMN phosphoryl serine).

Belongs to the NqrC family. As to quaternary structure, composed of six subunits; NqrA, NqrB, NqrC, NqrD, NqrE and NqrF. FMN is required as a cofactor.

The protein localises to the cell inner membrane. The enzyme catalyses a ubiquinone + n Na(+)(in) + NADH + H(+) = a ubiquinol + n Na(+)(out) + NAD(+). Its function is as follows. NQR complex catalyzes the reduction of ubiquinone-1 to ubiquinol by two successive reactions, coupled with the transport of Na(+) ions from the cytoplasm to the periplasm. NqrA to NqrE are probably involved in the second step, the conversion of ubisemiquinone to ubiquinol. In Neisseria meningitidis serogroup B (strain ATCC BAA-335 / MC58), this protein is Na(+)-translocating NADH-quinone reductase subunit C.